A 101-amino-acid polypeptide reads, in one-letter code: Urease subunit beta (101 aa).

The protein belongs to the urease beta subunit family. Heterotrimer of UreA (gamma), UreB (beta) and UreC (alpha) subunits. Three heterotrimers associate to form the active enzyme.

It localises to the cytoplasm. The enzyme catalyses urea + 2 H2O + H(+) = hydrogencarbonate + 2 NH4(+). It participates in nitrogen metabolism; urea degradation; CO(2) and NH(3) from urea (urease route): step 1/1. This chain is Urease subunit beta, found in Allorhizobium ampelinum (strain ATCC BAA-846 / DSM 112012 / S4) (Agrobacterium vitis (strain S4)).